The sequence spans 57 residues: Large ribosomal subunit protein bL32 (57 aa).

The disordered stretch occupies residues 1-38 (MAVQQNKPTRSKRGMRRSHDALTAVTSLSVDKTSGEKH).

Belongs to the bacterial ribosomal protein bL32 family.

In Escherichia coli O7:K1 (strain IAI39 / ExPEC), this protein is Large ribosomal subunit protein bL32.